A 205-amino-acid polypeptide reads, in one-letter code: NADH-quinone oxidoreductase subunit J (205 aa).

The next 5 helical transmembrane spans lie at 1-21, 26-46, 54-74, 89-109, and 142-162; these read MPIFFYLFTTLIIISSLCVVL, VYSVLWLIFTFINGSGLMILL, LLIVIYVGAVAVLFLFVIMML, LSLSIFITLIMFADLVITIIL, and FMLPFQIAGLILFVAMISCIT.

It belongs to the complex I subunit 6 family.

It localises to the cell membrane. The enzyme catalyses a quinone + NADH + 5 H(+)(in) = a quinol + NAD(+) + 4 H(+)(out). Its function is as follows. NDH-1 shuttles electrons from NADH, via FMN and iron-sulfur (Fe-S) centers, to quinones in the respiratory chain. Couples the redox reaction to proton translocation (for every two electrons transferred, four hydrogen ions are translocated across the cytoplasmic membrane), and thus conserves the redox energy in a proton gradient. The polypeptide is NADH-quinone oxidoreductase subunit J (nuoJ) (Rickettsia prowazekii (strain Madrid E)).